Reading from the N-terminus, the 183-residue chain is NADH-quinone oxidoreductase subunit A (183 aa).

The next 3 membrane-spanning stretches (helical) occupy residues 11–31 (IIAF…VPLL), 63–83 (FYLV…LYAW), and 98–118 (MVIF…TGAL). The segment at 160 to 183 (GHIPAQSSGRMKSKTSTAPSSKQE) is disordered. Positions 164-183 (AQSSGRMKSKTSTAPSSKQE) are enriched in polar residues.

Belongs to the complex I subunit 3 family. As to quaternary structure, NDH-1 is composed of 14 different subunits. Subunits NuoA, H, J, K, L, M, N constitute the membrane sector of the complex.

Its subcellular location is the cell inner membrane. The catalysed reaction is a quinone + NADH + 5 H(+)(in) = a quinol + NAD(+) + 4 H(+)(out). NDH-1 shuttles electrons from NADH, via FMN and iron-sulfur (Fe-S) centers, to quinones in the respiratory chain. The immediate electron acceptor for the enzyme in this species is believed to be ubiquinone. Couples the redox reaction to proton translocation (for every two electrons transferred, four hydrogen ions are translocated across the cytoplasmic membrane), and thus conserves the redox energy in a proton gradient. The chain is NADH-quinone oxidoreductase subunit A from Acinetobacter baylyi (strain ATCC 33305 / BD413 / ADP1).